We begin with the raw amino-acid sequence, 134 residues long: DNA-binding protein H-NS, plasmid (134 aa).

A coiled-coil region spans residues Leu23–Glu67. The disordered stretch occupies residues Ser77–Lys96. The DNA-binding element occupies Gln112–Lys117.

It belongs to the histone-like protein H-NS family. In terms of assembly, homodimer that oligomerizes on DNA into higher-order complexes that form bridges between disparate regions of DNA compacting it. Interacts with Hha, YdgT and StpA.

The protein localises to the cytoplasm. The protein resides in the nucleoid. Its function is as follows. A DNA-binding protein implicated in transcriptional repression and chromosome organization and compaction. Binds DNA, modifying gene expression, especially non-core genes. Does not regulate the same set of genes as its chromosomal counterpart (tested in S.typhimurium strain SL1344 / SV5015, chromosomal H-NS protein is AC A0A0H3NBY9). Thus it has a not-completely overlapping set of gene targets compared to its chromosomal homolog; many of these target genes are either plasmid-encoded or acquired by horizontally transferred genes (HTG). This protein can function in the absence of H-NS-modulating protein Hha (either chromosomal or plasmid-encoded), although many HTG genes are regulated by an H-NS/Hha complex. Binds nucleation sites in AT-rich DNA and bridges them, forming higher-order nucleoprotein complexes and condensing the chromosome. A subset of genes are repressed by H-NS in association with Hha and/or Cnu (ydgT). This chain is DNA-binding protein H-NS, plasmid (hns), found in Salmonella typhi.